A 1477-amino-acid chain; its full sequence is MAELHPRTGKLISLSNGNRTAARKQPAQEFNQGLVVSARPLGPGEVFTVRLDRKMNSWSGSMEIGLTTQDPAFLDFPSSATGLKGGSWIVSGCSVLEDGRSVLEEYGQDLDQLGEGDRVGVQRSISGELHLWVNGRDCGAASCGIPPRVWAVVDLYGKCTQITVLSCQPPPEEEEEEDAEEQEGSLVPLGQSRPDKFPNSLDTDSGFPSTELSAVVSNAILSAYHGSLLSVSLGSPPAAIEHSPPTCNDALLFHEKCGTLIKLSNGNKTAERRRPLDEFNNGVVMTNRPLRDCEMFEIRIDKLVDKWSGSIEIGVTTHNPNSLEYPATMTNLRSGTIMMSGCGILTNGKGTRREYCEFSLDELQEGDHIGLTRKSSGALHFYINGMDQGVASCQTPPVVYGVVDLYGMAVKVTIVHNHNHADRLRRNNAILRARSPDTGRHSSSTPEPGQLLFHSNCGQKASIINGGRTALRPHATDDFNHGVVLSNRPLQNNEVFQVRIDKMVDKWAGSIEIGVTTHNPAYLQLPSTMTNLRSGTWMMTGNGVMHNGTTILDEYGHNLDRLKAGDTVGVVRREDGTLNFFVNGIAQGVAAWNVPPNVFAVVDLYGQAAQATIMDESDALPLPGDEDEGLALTPGTPCALLSLSDLRFHHLHGANALITNGGRTVLRKNSRSEFNDAIVMSSRPLRDGEMFEIVIQKMVDRWSGSIEAGVTAIRPEDLEFPNTMTDIDYDTWMLSGTAIMQDGNTLRNNYGCDLDSLGAGSRIGMMKTIRGDLHYFINGEDQGVACTGLPMGRDIYAVIDLYGQCVQVSLTGGSGLVDNSLSASHVTDKSLPSQSPVPSVSHRFHTVCGKNVSVLCDGTRAERGAGCSHGIVFSSRELLTNETFEIRVEKIEPHWSGSCNIGVTSLSPHEVSLLGGGLPERALELRSKVTWLVCGSEVTRNGQRLRENYCNSLERVRVGSRLGVRRDSDDTLHILMNGEDMGPAACGIPKAVYAVLDIHGCITALSTVSSSLLEEPDATKPPSITSESEEEEDPADHGDPHTVIQAHSLQFLANHGKNILLSHGNRTATRVSSYNQGIVVLPQPLPRLFLFQIRIDQLSPHWTSSLSIGVIAVSPERLNFPATAAALKRSSWIFQRSAVLCNGVKIREGYGPNLDLCPEGTCLGLLLDSSGGLHLYVNGLDQGVGAQDLPEVCYVLVDLYGQCEQVSIVTGEAQGAELDAHEGQLPGEREKADMVDGVKESLCWVPPDPVALLSCEYLALCTRFKDLLLLPDGYFLEDSKLCVCHCDSCHKLRGDETYRKRGDPPREYAEPIGWCSFPLRLSPRSSCAQYKKWHIAYQGSSAGTIRRTLDRGDLLPGSACILTSVPAKSDPQSGFPAAEPNVLPPRDLQSVVLSPTLRYAALPEMCPKVMFRDPRSQRMFGAQVALQVCVRPGSYKTGPPSACAIDLMDPRIPSSEMEFLTKEKGATVLRGLLVRVE.

Disordered regions lie at residues 1–26 (MAEL…RKQP) and 168–196 (QPPP…RPDK). One can recognise an NHR 1 domain in the interval 1 to 167 (MAELHPRTGK…KCTQITVLSC (167 aa)). The segment covering 171–183 (PEEEEEEDAEEQE) has biased composition (acidic residues). 4 consecutive NHR domains span residues 250 to 417 (ALLF…IVHN), 450 to 616 (QLLF…IMDE), 645 to 813 (DLRF…LTGG), and 841 to 1010 (SHRF…TVSS). The interval 1012–1041 (LLEEPDATKPPSITSESEEEEDPADHGDPH) is disordered. An NHR 6 domain is found at 1048–1211 (SLQFLANHGK…QCEQVSIVTG (164 aa)).

Ubiquitinated. This ubiquitination leads to proteasomal degradation.

It is found in the cytoplasm. Its subcellular location is the cytoskeleton. It localises to the microtubule organizing center. The protein resides in the centrosome. The protein localises to the centriole. In terms of biological role, promotes CCP110 ubiquitination and proteasome-dependent degradation. By counteracting accumulation of CP110, maintains normal centriolar homeostasis and preventing formation of ectopic microtubular organizing centers. This is Neuralized-like protein 4 (neurl4) from Xenopus tropicalis (Western clawed frog).